Here is a 360-residue protein sequence, read N- to C-terminus: Phosphoserine aminotransferase (360 aa).

L-glutamate is bound at residue R42. Pyridoxal 5'-phosphate-binding positions include 76-77 (AS), W102, T152, D172, and Q195. Position 196 is an N6-(pyridoxal phosphate)lysine (K196). Residue 237-238 (NT) participates in pyridoxal 5'-phosphate binding.

Belongs to the class-V pyridoxal-phosphate-dependent aminotransferase family. SerC subfamily. Homodimer. Requires pyridoxal 5'-phosphate as cofactor.

It is found in the cytoplasm. It catalyses the reaction O-phospho-L-serine + 2-oxoglutarate = 3-phosphooxypyruvate + L-glutamate. The enzyme catalyses 4-(phosphooxy)-L-threonine + 2-oxoglutarate = (R)-3-hydroxy-2-oxo-4-phosphooxybutanoate + L-glutamate. Its pathway is amino-acid biosynthesis; L-serine biosynthesis; L-serine from 3-phospho-D-glycerate: step 2/3. Functionally, catalyzes the reversible conversion of 3-phosphohydroxypyruvate to phosphoserine and of 3-hydroxy-2-oxo-4-phosphonooxybutanoate to phosphohydroxythreonine. The sequence is that of Phosphoserine aminotransferase from Bacillus thuringiensis subsp. konkukian (strain 97-27).